A 413-amino-acid chain; its full sequence is Multifunctional CCA protein (413 aa).

2 residues coordinate ATP: Gly-8 and Arg-11. Residues Gly-8 and Arg-11 each contribute to the CTP site. Mg(2+) is bound by residues Asp-21 and Asp-23. 3 residues coordinate ATP: Arg-91, Arg-137, and Arg-140. CTP-binding residues include Arg-91, Arg-137, and Arg-140. One can recognise an HD domain in the interval 228-329 (TGVHTLMTLS…VKLFDAIDAW (102 aa)).

Belongs to the tRNA nucleotidyltransferase/poly(A) polymerase family. Bacterial CCA-adding enzyme type 1 subfamily. As to quaternary structure, monomer. Can also form homodimers and oligomers. Requires Mg(2+) as cofactor. Ni(2+) is required as a cofactor.

The enzyme catalyses a tRNA precursor + 2 CTP + ATP = a tRNA with a 3' CCA end + 3 diphosphate. The catalysed reaction is a tRNA with a 3' CCA end + 2 CTP + ATP = a tRNA with a 3' CCACCA end + 3 diphosphate. In terms of biological role, catalyzes the addition and repair of the essential 3'-terminal CCA sequence in tRNAs without using a nucleic acid template. Adds these three nucleotides in the order of C, C, and A to the tRNA nucleotide-73, using CTP and ATP as substrates and producing inorganic pyrophosphate. tRNA 3'-terminal CCA addition is required both for tRNA processing and repair. Also involved in tRNA surveillance by mediating tandem CCA addition to generate a CCACCA at the 3' terminus of unstable tRNAs. While stable tRNAs receive only 3'-terminal CCA, unstable tRNAs are marked with CCACCA and rapidly degraded. The sequence is that of Multifunctional CCA protein from Salmonella typhi.